Here is a 161-residue protein sequence, read N- to C-terminus: Large ribosomal subunit protein uL11 (161 aa).

Belongs to the universal ribosomal protein uL11 family. As to quaternary structure, part of the ribosomal stalk of the 50S ribosomal subunit. Interacts with L10 and the large rRNA to form the base of the stalk. L10 forms an elongated spine to which L12 dimers bind in a sequential fashion forming a multimeric L10(L12)X complex.

In terms of biological role, forms part of the ribosomal stalk which helps the ribosome interact with GTP-bound translation factors. The protein is Large ribosomal subunit protein uL11 of Methanocaldococcus jannaschii (strain ATCC 43067 / DSM 2661 / JAL-1 / JCM 10045 / NBRC 100440) (Methanococcus jannaschii).